Here is a 159-residue protein sequence, read N- to C-terminus: D-aminoacyl-tRNA deacylase (159 aa).

A Gly-cisPro motif, important for rejection of L-amino acids motif is present at residues 146–147 (GP).

It belongs to the DTD family. As to quaternary structure, homodimer.

It is found in the cytoplasm. It carries out the reaction glycyl-tRNA(Ala) + H2O = tRNA(Ala) + glycine + H(+). The catalysed reaction is a D-aminoacyl-tRNA + H2O = a tRNA + a D-alpha-amino acid + H(+). In terms of biological role, an aminoacyl-tRNA editing enzyme that deacylates mischarged D-aminoacyl-tRNAs. Also deacylates mischarged glycyl-tRNA(Ala), protecting cells against glycine mischarging by AlaRS. Acts via tRNA-based rather than protein-based catalysis; rejects L-amino acids rather than detecting D-amino acids in the active site. By recycling D-aminoacyl-tRNA to D-amino acids and free tRNA molecules, this enzyme counteracts the toxicity associated with the formation of D-aminoacyl-tRNA entities in vivo and helps enforce protein L-homochirality. The protein is D-aminoacyl-tRNA deacylase of Bifidobacterium animalis subsp. lactis (strain AD011).